The following is a 339-amino-acid chain: MTVRVGINGFGRIGRNFYRALLAQQEQGTADVEVVAANDITDNSTLAHLLKFDSILGRLPCDVGLEGDDTIVVGRAKIKALAVREGPAALPWGDLGVDVVVESTGLFTNAAKAKGHLDAGAKKVIISAPATDEDITIVLGVNDDKYDGSQNIISNASCTTNCLAPLAKVLDDEFGIVKGLMTTIHAYTQDQNLQDGPHKDLRRARAAALNIVPTSTGAAKAIGLVMPQLKGKLDGYALRVPIPTGSVTDLTVDLSTRASVDEINAAFKAAAEGRLKGILKYYDAPIVSSDIVTDPHSSIFDSGLTKVIDDQAKVVSWYDNEWGYSNRLVDLVTLVGKSL.

Residues 12-13, D39, R84, and S127 contribute to the NAD(+) site; that span reads RI. Residues 157 to 159, T188, R203, 216 to 217, and R239 each bind D-glyceraldehyde 3-phosphate; these read SCT and TG. The Nucleophile role is filled by C158. N320 contributes to the NAD(+) binding site.

Belongs to the glyceraldehyde-3-phosphate dehydrogenase family. Homotetramer.

It is found in the cytoplasm. The catalysed reaction is D-glyceraldehyde 3-phosphate + phosphate + NAD(+) = (2R)-3-phospho-glyceroyl phosphate + NADH + H(+). It functions in the pathway carbohydrate degradation; glycolysis; pyruvate from D-glyceraldehyde 3-phosphate: step 1/5. Catalyzes the oxidative phosphorylation of glyceraldehyde 3-phosphate (G3P) to 1,3-bisphosphoglycerate (BPG) using the cofactor NAD. The first reaction step involves the formation of a hemiacetal intermediate between G3P and a cysteine residue, and this hemiacetal intermediate is then oxidized to a thioester, with concomitant reduction of NAD to NADH. The reduced NADH is then exchanged with the second NAD, and the thioester is attacked by a nucleophilic inorganic phosphate to produce BPG. The sequence is that of Glyceraldehyde-3-phosphate dehydrogenase (gap) from Mycobacterium bovis (strain ATCC BAA-935 / AF2122/97).